The primary structure comprises 119 residues: Large ribosomal subunit protein uL18 (119 aa).

The protein belongs to the universal ribosomal protein uL18 family. In terms of assembly, part of the 50S ribosomal subunit; part of the 5S rRNA/L5/L18/L25 subcomplex. Contacts the 5S and 23S rRNAs.

Functionally, this is one of the proteins that bind and probably mediate the attachment of the 5S RNA into the large ribosomal subunit, where it forms part of the central protuberance. This is Large ribosomal subunit protein uL18 from Anaeromyxobacter dehalogenans (strain 2CP-C).